A 683-amino-acid polypeptide reads, in one-letter code: DNA ligase (683 aa).

Residues 35 to 39 (DTEYD), 84 to 85 (SL), and Glu-116 each bind NAD(+). The active-site N6-AMP-lysine intermediate is Lys-118. Residues Arg-139, Glu-176, Lys-293, and Lys-317 each contribute to the NAD(+) site. Zn(2+)-binding residues include Cys-419, Cys-422, Cys-437, and Cys-443. One can recognise a BRCT domain in the interval 602–683 (AGPQLLAGKT…LMKLLAKGVE (82 aa)).

It belongs to the NAD-dependent DNA ligase family. LigA subfamily. Mg(2+) serves as cofactor. Mn(2+) is required as a cofactor.

It carries out the reaction NAD(+) + (deoxyribonucleotide)n-3'-hydroxyl + 5'-phospho-(deoxyribonucleotide)m = (deoxyribonucleotide)n+m + AMP + beta-nicotinamide D-nucleotide.. Functionally, DNA ligase that catalyzes the formation of phosphodiester linkages between 5'-phosphoryl and 3'-hydroxyl groups in double-stranded DNA using NAD as a coenzyme and as the energy source for the reaction. It is essential for DNA replication and repair of damaged DNA. This chain is DNA ligase, found in Dechloromonas aromatica (strain RCB).